A 66-amino-acid chain; its full sequence is MKKIVFVLVLMLSSFGTFGQETASRQFGDAFSTPIAAEVNKKACDTELPPSDWCCEVCCNPACAGC.

A signal peptide spans 1-19; that stretch reads MKKIVFVLVLMLSSFGTFG. A propeptide spanning residues 20 to 50 is cleaved from the precursor; that stretch reads QETASRQFGDAFSTPIAAEVNKKACDTELPP. Cystine bridges form between C54-C59, C55-C63, and C58-C66.

Belongs to the heat-stable enterotoxin family.

It is found in the secreted. In terms of biological role, toxin which activates the particulate form of guanylate cyclase and increases cyclic GMP levels within the host intestinal epithelial cells. The sequence is that of Heat-stable enterotoxin (yst) from Yersinia kristensenii.